The chain runs to 305 residues: tRNA dimethylallyltransferase 1 (305 aa).

10-17 (GPTASGKT) is a binding site for ATP. Residue 12–17 (TASGKT) coordinates substrate. Positions 35 to 38 (DSRQ) are interaction with substrate tRNA.

This sequence belongs to the IPP transferase family. Monomer. It depends on Mg(2+) as a cofactor.

The catalysed reaction is adenosine(37) in tRNA + dimethylallyl diphosphate = N(6)-dimethylallyladenosine(37) in tRNA + diphosphate. Catalyzes the transfer of a dimethylallyl group onto the adenine at position 37 in tRNAs that read codons beginning with uridine, leading to the formation of N6-(dimethylallyl)adenosine (i(6)A). This chain is tRNA dimethylallyltransferase 1, found in Syntrophus aciditrophicus (strain SB).